The chain runs to 434 residues: Zinc finger protein Pegasus (434 aa).

Positions 33–57 are disordered; that stretch reads VSSDKEAETLQGAGTDSDQNGLDHP. 3 consecutive C2H2-type zinc fingers follow at residues 82-104, 110-132, and 138-161; these read LKCR…IRIH, HRCH…MRSH, and YKCE…RRKH. Polar residues predominate over residues 260 to 274; it reads GQLSSLPPDTQNPAS. Positions 260–357 are disordered; that stretch reads GQLSSLPPDT…PSTPAPALPA (98 aa). Residues 296–313 are compositionally biased toward low complexity; the sequence is CASAVSTSVAQSSSPASP. A compositionally biased stretch (polar residues) spans 337–349; sequence RTSTPSISNSQPS. C2H2-type zinc fingers lie at residues 364-386 and 392-419; these read HHCQ…MGCH and FQCN…CCQH.

This sequence belongs to the Ikaros C2H2-type zinc-finger protein family. In terms of assembly, probably self-associates.

The protein resides in the nucleus. Transcriptional repressor that binds the core 5'GNNTGTNG-3' DNA consensus sequence. The chain is Zinc finger protein Pegasus (ikzf5) from Xenopus tropicalis (Western clawed frog).